The primary structure comprises 156 residues: Glutamine--fructose-6-phosphate aminotransferase [isomerizing] (156 aa).

In terms of domain architecture, SIS spans 4 to 146 (MAHHIVPARD…VLKGTDVDQP (143 aa)). The active-site For Fru-6P isomerization activity is the Lys-151.

Homodimer.

It is found in the cytoplasm. It catalyses the reaction D-fructose 6-phosphate + L-glutamine = D-glucosamine 6-phosphate + L-glutamate. Catalyzes the first step in hexosamine metabolism, converting fructose-6P into glucosamine-6P using glutamine as a nitrogen source. This is Glutamine--fructose-6-phosphate aminotransferase [isomerizing] (glmS) from Sphingobium yanoikuyae (Sphingomonas yanoikuyae).